The following is a 498-amino-acid chain: Probable malate:quinone oxidoreductase 2 (498 aa).

This sequence belongs to the MQO family. It depends on FAD as a cofactor.

The catalysed reaction is (S)-malate + a quinone = a quinol + oxaloacetate. Its pathway is carbohydrate metabolism; tricarboxylic acid cycle; oxaloacetate from (S)-malate (quinone route): step 1/1. The polypeptide is Probable malate:quinone oxidoreductase 2 (Staphylococcus aureus (strain COL)).